We begin with the raw amino-acid sequence, 409 residues long: SPI-1 type 3 secretion system translocon protein SctB (409 aa).

The chain crosses the membrane as a helical span at residues 119-140 (ISGMSSSAVALLAAANTLMLTL).

This sequence belongs to the SctB/SipC family. In terms of assembly, the core secretion machinery of the T3SS is composed of approximately 20 different proteins, including cytoplasmic components, a base, an export apparatus and a needle. This subunit is involved in the formation of a pore, called the translocon, in host membrane.

The protein localises to the secreted. It is found in the host membrane. Component of the type III secretion system 1 (SPI-1 T3SS), also called injectisome, which is used to inject bacterial effector proteins into eukaryotic host cells. SipB/SctE1 and SipC/SctB1 are inserted into the host membrane where they form a pore and allow the translocation of effector proteins into the cytosol of target cells. The protein is SPI-1 type 3 secretion system translocon protein SctB of Salmonella typhimurium (strain 14028s / SGSC 2262).